Reading from the N-terminus, the 538-residue chain is Syncytin-2 (538 aa).

A signal peptide spans 1–15 (MGLLLLVLILTPSLA). The Extracellular segment spans residues 16-478 (AYRHPDFPLL…GWLNWEGTWK (463 aa)). The CXXC motif lies at 43–46 (CWLC). Disulfide bonds link cysteine 43–cysteine 46, cysteine 43–cysteine 439, and cysteine 431–cysteine 438. N-linked (GlcNAc...) asparagine glycans are attached at residues asparagine 133, asparagine 146, asparagine 177, asparagine 220, asparagine 241, asparagine 247, asparagine 312, and asparagine 332. Positions 354 to 374 (FIPLLAGLGILAGTGTGIAGI) are fusion peptide. The CKS-17 signature appears at 414 to 430 (LQNRRGLDMLTAAQGGI). The CX6CC motif lies at 431–439 (CLALDEKCC). N-linked (GlcNAc...) asparagine glycosylation occurs at asparagine 443. The chain crosses the membrane as a helical span at residues 479–499 (WFSWVLPLTGPLVSLLLLLLF). Residues 500 to 538 (GPCLLNLITQFVSSRLQAIKLQTNLSAGRRPRNIQESPF) are Cytoplasmic-facing.

It belongs to the gamma type-C retroviral envelope protein family. HERV class-I FRD env subfamily. The surface and transmembrane proteins form a heterodimer. They are attached by non-covalent interactions or by a labile interchain disulfide bond. Post-translationally, specific enzymatic cleavages in vivo yield the mature SU and TM proteins. In terms of processing, the CXXC motif is highly conserved across a broad range of retroviral envelope proteins. It is thought to participate in the formation of a labile disulfide bond possibly with the CX6CC motif present in the transmembrane protein.

The protein localises to the virion. The protein resides in the cell membrane. Functionally, this endogenous retroviral envelope protein has retained its original fusogenic properties and participates in trophoblast fusion and the formation of a syncytium during placenta morphogenesis. The interaction with MFSD2A is apparently important for this process. Endogenous envelope proteins may have kept, lost or modified their original function during evolution but this one can still make pseudotypes with MLV, HIV-1 or SIV-1 virions and confer infectivity. Retroviral envelope proteins mediate receptor recognition and membrane fusion during early infection. The surface protein mediates receptor recognition, while the transmembrane protein anchors the envelope heterodimer to the viral membrane through one transmembrane domain. The other hydrophobic domain, called fusion peptide, mediates fusion of the viral membrane with the target cell membrane. In Gorilla gorilla gorilla (Western lowland gorilla), this protein is Syncytin-2 (ERVFRD-1).